We begin with the raw amino-acid sequence, 619 residues long: Kinesin light chain 4 (619 aa).

Serine 2 is subject to N-acetylserine. One copy of the TPR 1 repeat lies at 55 to 88 (QQGGHEEGLVHEKARQLRRSMENIELGLSEAQVM). The stretch at 65–155 (HEKARQLRRS…HLEFLRQLRQ (91 aa)) forms a coiled coil. Over residues 156–175 (YDEDGHGMEEKEGEATKDSL) the composition is skewed to basic and acidic residues. The disordered stretch occupies residues 156–199 (YDEDGHGMEEKEGEATKDSLDDLFPNEEEEDSGNDLSRGQGAAA). Residue serine 174 is modified to Phosphoserine. Acidic residues predominate over residues 179-188 (FPNEEEEDSG). TPR repeat units lie at residues 211–244 (LRTL…LERT), 253–286 (ATML…REST), 295–328 (AATL…REKV), 337–370 (AKQL…YESQ), and 379–412 (ARTK…AHVQ). The residue at position 460 (serine 460) is a Phosphoserine. Residues 464 to 497 (NTTLKNLGALYRRQGKLEAAETLEECALRSRKQG) form a TPR 7 repeat. Phosphoserine occurs at positions 565, 566, and 590. The disordered stretch occupies residues 571 to 619 (RKLQGTEPRPSSSSMKRAASLNYLNQPNAAPLQVSRGLSASTVDLSSSS). The segment covering 609-619 (SASTVDLSSSS) has biased composition (low complexity). Threonine 612 is subject to Phosphothreonine.

Belongs to the kinesin light chain family. As to quaternary structure, oligomeric complex composed of two heavy chains and two light chains.

It localises to the cytoplasm. It is found in the cytoskeleton. Functionally, kinesin is a microtubule-associated force-producing protein that may play a role in organelle transport. The light chain may function in coupling of cargo to the heavy chain or in the modulation of its ATPase activity. The protein is Kinesin light chain 4 (Klc4) of Mus musculus (Mouse).